A 359-amino-acid chain; its full sequence is DNA integrity scanning protein DisA (359 aa).

Residues 7–145 (DPTGRAVLRA…DGRRWVLEDS (139 aa)) enclose the DAC domain. Residues G74, L92, and 105-109 (TRHRT) each bind ATP.

This sequence belongs to the DisA family. As to quaternary structure, homooctamer. It depends on Mg(2+) as a cofactor.

The enzyme catalyses 2 ATP = 3',3'-c-di-AMP + 2 diphosphate. Participates in a DNA-damage check-point. DisA forms globular foci that rapidly scan along the chromosomes searching for lesions. In terms of biological role, also has diadenylate cyclase activity, catalyzing the condensation of 2 ATP molecules into cyclic di-AMP (c-di-AMP). c-di-AMP likely acts as a signaling molecule that may couple DNA integrity with a cellular process. The chain is DNA integrity scanning protein DisA from Beutenbergia cavernae (strain ATCC BAA-8 / DSM 12333 / CCUG 43141 / JCM 11478 / NBRC 16432 / NCIMB 13614 / HKI 0122).